A 357-amino-acid polypeptide reads, in one-letter code: DNA replication and repair protein RecF (357 aa).

31–38 (GQNGAGKT) provides a ligand contact to ATP.

This sequence belongs to the RecF family.

It is found in the cytoplasm. The RecF protein is involved in DNA metabolism; it is required for DNA replication and normal SOS inducibility. RecF binds preferentially to single-stranded, linear DNA. It also seems to bind ATP. The protein is DNA replication and repair protein RecF of Coxiella burnetii (strain Dugway 5J108-111).